We begin with the raw amino-acid sequence, 66 residues long: UPF0337 protein BP1738 (66 aa).

It belongs to the UPF0337 (CsbD) family.

In Bordetella pertussis (strain Tohama I / ATCC BAA-589 / NCTC 13251), this protein is UPF0337 protein BP1738.